Here is a 98-residue protein sequence, read N- to C-terminus: Small ribosomal subunit protein bS20 (98 aa).

The span at 1–15 (MAPKKTTKKGGPKKR) shows a compositional bias: basic residues. The disordered stretch occupies residues 1 to 21 (MAPKKTTKKGGPKKRPSAEKR).

The protein belongs to the bacterial ribosomal protein bS20 family.

Functionally, binds directly to 16S ribosomal RNA. The chain is Small ribosomal subunit protein bS20 from Chlamydia abortus (strain DSM 27085 / S26/3) (Chlamydophila abortus).